Consider the following 676-residue polypeptide: Putative Xaa-Pro dipeptidyl-peptidase (676 aa).

Catalysis depends on charge relay system residues Ser224, Asp330, and His361. A disordered region spans residues 423-450 (RPGTGTQAGVGTLGLRTGSGTETFTDDP).

This sequence belongs to the peptidase S15 family.

It carries out the reaction Hydrolyzes Xaa-Pro-|- bonds to release unblocked, N-terminal dipeptides from substrates including Ala-Pro-|-p-nitroanilide and (sequentially) Tyr-Pro-|-Phe-Pro-|-Gly-Pro-|-Ile.. In Streptomyces avermitilis (strain ATCC 31267 / DSM 46492 / JCM 5070 / NBRC 14893 / NCIMB 12804 / NRRL 8165 / MA-4680), this protein is Putative Xaa-Pro dipeptidyl-peptidase.